The chain runs to 485 residues: Eukaryotic translation initiation factor 3 subunit E (485 aa).

Residues 219 to 391 (NQPDGPDGIV…GEIHITKPVT (173 aa)) enclose the PCI domain. The interval 444–485 (QGGGKSNKKGDYKKGDYKKGGDFKKGGDFKKGGDHKKRAWVK) is disordered. Basic and acidic residues predominate over residues 451–475 (KKGDYKKGDYKKGGDFKKGGDFKKG). Residues 476 to 485 (GDHKKRAWVK) are compositionally biased toward basic residues.

This sequence belongs to the eIF-3 subunit E family. In terms of assembly, component of the eukaryotic translation initiation factor 3 (eIF-3) complex.

The protein localises to the cytoplasm. Functionally, component of the eukaryotic translation initiation factor 3 (eIF-3) complex, which is involved in protein synthesis of a specialized repertoire of mRNAs and, together with other initiation factors, stimulates binding of mRNA and methionyl-tRNAi to the 40S ribosome. The eIF-3 complex specifically targets and initiates translation of a subset of mRNAs involved in cell proliferation. The protein is Eukaryotic translation initiation factor 3 subunit E of Monosiga brevicollis (Choanoflagellate).